Here is a 268-residue protein sequence, read N- to C-terminus: Protein MSS18 (268 aa).

To baculovirus occlusion-derived virus envelope protein E27 (ODV-E27).

The protein localises to the mitochondrion. In terms of biological role, involved in splicing of intron aI5-beta of the mitochondrial COX1 transcript. The protein is Protein MSS18 (MSS18) of Saccharomyces cerevisiae (strain ATCC 204508 / S288c) (Baker's yeast).